Consider the following 214-residue polypeptide: Oxaloacetate tautomerase fahd-1, mitochondrial (214 aa).

Mg(2+) is bound by residues Glu-65, Glu-67, and Asp-96.

Belongs to the FAH family. Mg(2+) serves as cofactor. The cofactor is Mn(2+). As to expression, widely expressed.

It is found in the mitochondrion. It catalyses the reaction oxaloacetate = enol-oxaloacetate. Tautomerase that converts enol-oxaloacetate, a strong inhibitor of succinate dehydrogenase, to the physiological keto form of oxaloacetate. The polypeptide is Oxaloacetate tautomerase fahd-1, mitochondrial (Caenorhabditis elegans).